Reading from the N-terminus, the 509-residue chain is MYPNSPSLGRIPLPLPCARQQQTSAYLSKVPVSVAPDLLSPEQFFQASLNIHKNANLPRLLMNGNVLTVPPLSSPPWSYLNHSPLISPGSPPSSFQNRKRRSDEGNSPYDVKRQRFQSPQEQTVNHQAVPLRGDIRCSYPGSPAFPLLQSPSPPVLKGHSSNSGDCWLYDHIDTTLPVAKDKLSKQILDLFQALQQQVCDLKKKDICRAELQREIQQIFPQSRLYLVGSSLNGFGIRSSDADLCLVLKEEPMNQNTEARHILSLLHKHFYTRLSYIERPQFIRAKVPIVKFRDKVSGAEFDLNVNNVVGIRNTFLLRTYAYLDKRVRPLVLVIKKWANHHGINDASRGTLSSYTIVLMVLHYLQTLPEPILPSLQKKYPECFDRTMQLHLVHQAPRNIPQFLSKNETPLGDLLLGFLKYFAVEFDWSKDIISLREAKALPRTDDYEWRNKYICVEEPFDGSNTARAVYEKQKFDLIRAEFLKAWVALRDNRDLYSLLPVKGIMKKMHSL.

Positions 88–125 (PGSPPSSFQNRKRRSDEGNSPYDVKRQRFQSPQEQTVN) are disordered. Over residues 116–125 (FQSPQEQTVN) the composition is skewed to polar residues. 2 residues coordinate Mg(2+): aspartate 240 and aspartate 242. Residues 409–462 (LGDLLLGFLKYFAVEFDWSKDIISLREAKALPRTDDYEWRNKYICVEEPFDGSN) form the PAP-associated domain.

This sequence belongs to the DNA polymerase type-B-like family. GLD2 subfamily. In terms of assembly, component of a complex at least composed of cpeb1, cpsf1, tent2/gld2, pabpc1/ePAB, parn and sympk. Following oocyte maturation, parn is expelled from the complex. Interacts with rbfox2. Interacts with sympk. Mg(2+) is required as a cofactor. Mn(2+) serves as cofactor.

It is found in the cytoplasm. The catalysed reaction is RNA(n) + ATP = RNA(n)-3'-adenine ribonucleotide + diphosphate. Cytoplasmic poly(A) RNA polymerase that adds successive AMP monomers to the 3'-end of specific RNAs, forming a poly(A) tail. In contrast to the canonical nuclear poly(A) RNA polymerase, it only adds poly(A) to selected cytoplasmic mRNAs during oocyte maturation. Plays a central role during oocyte maturation by mediating polyadenylation of dormant mRNAs, which contain 5'AAUAAA-3' sequence in their 3'-UTR. In immature oocytes, polyadenylation of poly(A) tails is counteracted by the ribonuclease parn. During maturation parn is excluded from the ribonucleoprotein complex, allowing poly(A) elongation and activation of mRNAs. May not play a role in replication-dependent histone mRNA degradation. This chain is Poly(A) RNA polymerase GLD2-B, found in Xenopus laevis (African clawed frog).